The following is a 284-amino-acid chain: Bifunctional protein FolD (284 aa).

NADP(+) contacts are provided by residues 166 to 168 and Ile232; that span reads GAS.

The protein belongs to the tetrahydrofolate dehydrogenase/cyclohydrolase family. Homodimer.

It catalyses the reaction (6R)-5,10-methylene-5,6,7,8-tetrahydrofolate + NADP(+) = (6R)-5,10-methenyltetrahydrofolate + NADPH. The catalysed reaction is (6R)-5,10-methenyltetrahydrofolate + H2O = (6R)-10-formyltetrahydrofolate + H(+). It functions in the pathway one-carbon metabolism; tetrahydrofolate interconversion. Catalyzes the oxidation of 5,10-methylenetetrahydrofolate to 5,10-methenyltetrahydrofolate and then the hydrolysis of 5,10-methenyltetrahydrofolate to 10-formyltetrahydrofolate. The sequence is that of Bifunctional protein FolD from Tolumonas auensis (strain DSM 9187 / NBRC 110442 / TA 4).